Consider the following 340-residue polypeptide: Glyceraldehyde-3-phosphate dehydrogenase 2 (340 aa).

NADP(+)-binding positions include 12–13 (RI), Arg-78, and Thr-120. D-glyceraldehyde 3-phosphate-binding positions include 151-153 (SCT) and Thr-182. Residue Cys-152 is the Nucleophile of the active site. Asn-183 lines the NADP(+) pocket. D-glyceraldehyde 3-phosphate contacts are provided by residues Arg-197, 210–211 (TG), and Arg-233. Asn-315 is a binding site for NADP(+).

Belongs to the glyceraldehyde-3-phosphate dehydrogenase family. In terms of assembly, homotetramer. Interacts with BrxC. In terms of processing, in response to oxidative stress, the active site Cys likely reacts with bacillithiol (BSH) to form mixed disulfides to protect the Cys residue against overoxidation. S-bacillithiolation presumably leads to loss of catalytic activity. Debacillithiolation by monothiol bacilliredoxin BrxC restores the activity.

It is found in the cytoplasm. It catalyses the reaction D-glyceraldehyde 3-phosphate + phosphate + NADP(+) = (2R)-3-phospho-glyceroyl phosphate + NADPH + H(+). The catalysed reaction is D-glyceraldehyde 3-phosphate + phosphate + NAD(+) = (2R)-3-phospho-glyceroyl phosphate + NADH + H(+). Its pathway is carbohydrate biosynthesis; gluconeogenesis. Functionally, involved in the gluconeogenesis. Catalyzes the oxidative phosphorylation of glyceraldehyde 3-phosphate (G3P) to 1,3-bisphosphoglycerate (BPG) using the cofactor NADP. The first reaction step involves the formation of a hemiacetal intermediate between G3P and a cysteine residue, and this hemiacetal intermediate is then oxidized to a thioester, with concomitant reduction of NADP to NADPH. The reduced NADPH is then exchanged with the second NADP, and the thioester is attacked by a nucleophilic inorganic phosphate to produce BPG. The polypeptide is Glyceraldehyde-3-phosphate dehydrogenase 2 (Bacillus subtilis (strain 168)).